A 612-amino-acid polypeptide reads, in one-letter code: UvrABC system protein C (612 aa).

In terms of domain architecture, GIY-YIG spans threonine 18–isoleucine 96. Residues proline 208–valine 243 form the UVR domain.

Belongs to the UvrC family. As to quaternary structure, interacts with UvrB in an incision complex.

Its subcellular location is the cytoplasm. In terms of biological role, the UvrABC repair system catalyzes the recognition and processing of DNA lesions. UvrC both incises the 5' and 3' sides of the lesion. The N-terminal half is responsible for the 3' incision and the C-terminal half is responsible for the 5' incision. The protein is UvrABC system protein C of Hahella chejuensis (strain KCTC 2396).